A 207-amino-acid polypeptide reads, in one-letter code: Outer-membrane lipoprotein LolB (207 aa).

A signal peptide spans 1-21 (MPLPDFRFIRLLPLAALVLTA). Cysteine 22 is lipidated: N-palmitoyl cysteine. Residue cysteine 22 is the site of S-diacylglycerol cysteine attachment.

The protein belongs to the LolB family. As to quaternary structure, monomer.

It is found in the cell outer membrane. In terms of biological role, plays a critical role in the incorporation of lipoproteins in the outer membrane after they are released by the LolA protein. In Escherichia coli O6:K15:H31 (strain 536 / UPEC), this protein is Outer-membrane lipoprotein LolB.